The chain runs to 204 residues: uncharacterized protein (204 aa).

An N-terminal signal peptide occupies residues 1-24 (MPINTFCKISLFICALFCSTVTLA).

This is an uncharacterized protein from Pasteurella multocida (strain Pm70).